The primary structure comprises 256 residues: Thiazole synthase (256 aa).

Lys-98 serves as the catalytic Schiff-base intermediate with DXP. Residues Gly-159, 185–186, and 207–208 each bind 1-deoxy-D-xylulose 5-phosphate; these read AG and NT.

This sequence belongs to the ThiG family. In terms of assembly, homotetramer. Forms heterodimers with either ThiH or ThiS.

It localises to the cytoplasm. The catalysed reaction is [ThiS sulfur-carrier protein]-C-terminal-Gly-aminoethanethioate + 2-iminoacetate + 1-deoxy-D-xylulose 5-phosphate = [ThiS sulfur-carrier protein]-C-terminal Gly-Gly + 2-[(2R,5Z)-2-carboxy-4-methylthiazol-5(2H)-ylidene]ethyl phosphate + 2 H2O + H(+). It participates in cofactor biosynthesis; thiamine diphosphate biosynthesis. Its function is as follows. Catalyzes the rearrangement of 1-deoxy-D-xylulose 5-phosphate (DXP) to produce the thiazole phosphate moiety of thiamine. Sulfur is provided by the thiocarboxylate moiety of the carrier protein ThiS. In vitro, sulfur can be provided by H(2)S. This Aliivibrio fischeri (strain MJ11) (Vibrio fischeri) protein is Thiazole synthase.